Consider the following 310-residue polypeptide: tRNA dimethylallyltransferase (310 aa).

An ATP-binding site is contributed by 14 to 21 (GPTASGKS). 16-21 (TASGKS) contacts substrate. 2 interaction with substrate tRNA regions span residues 39–42 (DSMQ) and 163–167 (QRIVR).

The protein belongs to the IPP transferase family. In terms of assembly, monomer. Mg(2+) is required as a cofactor.

The enzyme catalyses adenosine(37) in tRNA + dimethylallyl diphosphate = N(6)-dimethylallyladenosine(37) in tRNA + diphosphate. Functionally, catalyzes the transfer of a dimethylallyl group onto the adenine at position 37 in tRNAs that read codons beginning with uridine, leading to the formation of N6-(dimethylallyl)adenosine (i(6)A). This Brucella suis biovar 1 (strain 1330) protein is tRNA dimethylallyltransferase.